Consider the following 119-residue polypeptide: uncharacterized protein (119 aa).

The first 26 residues, 1 to 26 (MNKLKRLSMLTVMIASVFIFSSHALA), serve as a signal peptide directing secretion. Residues 30 to 104 (YTVSTSSGAP…IVPGFVSDTY (75 aa)) form the SH3b domain.

This sequence to B.subtilis YraJ.

This is an uncharacterized protein from Bacillus subtilis (strain 168).